The chain runs to 426 residues: Probable glucose-6-phosphate isomerase (426 aa).

Glu-272 serves as the catalytic Proton donor. Residues His-293 and Lys-404 contribute to the active site.

It belongs to the GPI family.

It localises to the cytoplasm. It carries out the reaction alpha-D-glucose 6-phosphate = beta-D-fructose 6-phosphate. Its pathway is carbohydrate biosynthesis; gluconeogenesis. It functions in the pathway carbohydrate degradation; glycolysis; D-glyceraldehyde 3-phosphate and glycerone phosphate from D-glucose: step 2/4. Its function is as follows. Catalyzes the reversible isomerization of glucose-6-phosphate to fructose-6-phosphate. The protein is Probable glucose-6-phosphate isomerase of Halobacterium salinarum (strain ATCC 700922 / JCM 11081 / NRC-1) (Halobacterium halobium).